The sequence spans 351 residues: UDP-N-acetylglucosamine--N-acetylmuramyl-(pentapeptide) pyrophosphoryl-undecaprenol N-acetylglucosamine transferase (351 aa).

UDP-N-acetyl-alpha-D-glucosamine-binding positions include 12–14, asparagine 124, arginine 160, serine 188, isoleucine 239, 258–263, and glutamine 283; these read TGG and ALTVCE.

It belongs to the glycosyltransferase 28 family. MurG subfamily.

Its subcellular location is the cell inner membrane. The enzyme catalyses di-trans,octa-cis-undecaprenyl diphospho-N-acetyl-alpha-D-muramoyl-L-alanyl-D-glutamyl-meso-2,6-diaminopimeloyl-D-alanyl-D-alanine + UDP-N-acetyl-alpha-D-glucosamine = di-trans,octa-cis-undecaprenyl diphospho-[N-acetyl-alpha-D-glucosaminyl-(1-&gt;4)]-N-acetyl-alpha-D-muramoyl-L-alanyl-D-glutamyl-meso-2,6-diaminopimeloyl-D-alanyl-D-alanine + UDP + H(+). It participates in cell wall biogenesis; peptidoglycan biosynthesis. Its function is as follows. Cell wall formation. Catalyzes the transfer of a GlcNAc subunit on undecaprenyl-pyrophosphoryl-MurNAc-pentapeptide (lipid intermediate I) to form undecaprenyl-pyrophosphoryl-MurNAc-(pentapeptide)GlcNAc (lipid intermediate II). This chain is UDP-N-acetylglucosamine--N-acetylmuramyl-(pentapeptide) pyrophosphoryl-undecaprenol N-acetylglucosamine transferase, found in Glaesserella parasuis serovar 5 (strain SH0165) (Haemophilus parasuis).